Here is a 119-residue protein sequence, read N- to C-terminus: Urease subunit beta (119 aa).

The protein belongs to the urease beta subunit family. Heterotrimer of UreA (gamma), UreB (beta) and UreC (alpha) subunits. Three heterotrimers associate to form the active enzyme.

The protein localises to the cytoplasm. It carries out the reaction urea + 2 H2O + H(+) = hydrogencarbonate + 2 NH4(+). The protein operates within nitrogen metabolism; urea degradation; CO(2) and NH(3) from urea (urease route): step 1/1. This chain is Urease subunit beta, found in Tolumonas auensis (strain DSM 9187 / NBRC 110442 / TA 4).